The following is a 227-amino-acid chain: Ribosomal RNA small subunit methyltransferase G (227 aa).

S-adenosyl-L-methionine contacts are provided by residues G69, F74, 119–120 (VE), and R134.

This sequence belongs to the methyltransferase superfamily. RNA methyltransferase RsmG family.

It localises to the cytoplasm. In terms of biological role, specifically methylates the N7 position of a guanine in 16S rRNA. The sequence is that of Ribosomal RNA small subunit methyltransferase G from Mycoplasmopsis pulmonis (strain UAB CTIP) (Mycoplasma pulmonis).